Here is a 472-residue protein sequence, read N- to C-terminus: Poly(A) polymerase catalytic subunit (472 aa).

Residues Asp194 and Asp196 contribute to the active site.

Belongs to the poxviridae poly(A) polymerase catalytic subunit family. In terms of assembly, heterodimer of a large (catalytic) subunit and a small (regulatory) subunit.

It carries out the reaction RNA(n) + ATP = RNA(n)-3'-adenine ribonucleotide + diphosphate. Polymerase that creates the 3'-poly(A) tail of mRNA's. The polypeptide is Poly(A) polymerase catalytic subunit (PAPL) (Fowlpox virus (strain NVSL) (FPV)).